A 146-amino-acid chain; its full sequence is Hut operon positive regulatory protein (146 aa).

This sequence belongs to the HutP family. As to quaternary structure, homohexamer.

Functionally, antiterminator that binds to cis-acting regulatory sequences on the mRNA in the presence of histidine, thereby suppressing transcription termination and activating the hut operon for histidine utilization. The protein is Hut operon positive regulatory protein of Bacillus cytotoxicus (strain DSM 22905 / CIP 110041 / 391-98 / NVH 391-98).